Consider the following 171-residue polypeptide: 3-hydroxydecanoyl-[acyl-carrier-protein] dehydratase (171 aa).

Histidine 71 is an active-site residue.

This sequence belongs to the thioester dehydratase family. FabA subfamily. As to quaternary structure, homodimer.

It is found in the cytoplasm. It catalyses the reaction a (3R)-hydroxyacyl-[ACP] = a (2E)-enoyl-[ACP] + H2O. The catalysed reaction is (3R)-hydroxydecanoyl-[ACP] = (2E)-decenoyl-[ACP] + H2O. It carries out the reaction (2E)-decenoyl-[ACP] = (3Z)-decenoyl-[ACP]. It functions in the pathway lipid metabolism; fatty acid biosynthesis. Functionally, necessary for the introduction of cis unsaturation into fatty acids. Catalyzes the dehydration of (3R)-3-hydroxydecanoyl-ACP to E-(2)-decenoyl-ACP and then its isomerization to Z-(3)-decenoyl-ACP. Can catalyze the dehydratase reaction for beta-hydroxyacyl-ACPs with saturated chain lengths up to 16:0, being most active on intermediate chain length. This chain is 3-hydroxydecanoyl-[acyl-carrier-protein] dehydratase, found in Rhizobium rhizogenes (strain K84 / ATCC BAA-868) (Agrobacterium radiobacter).